A 931-amino-acid chain; its full sequence is Glycine dehydrogenase (decarboxylating) (931 aa).

N6-(pyridoxal phosphate)lysine is present on K684.

This sequence belongs to the GcvP family. As to quaternary structure, the glycine cleavage system is composed of four proteins: P, T, L and H. It depends on pyridoxal 5'-phosphate as a cofactor.

It carries out the reaction N(6)-[(R)-lipoyl]-L-lysyl-[glycine-cleavage complex H protein] + glycine + H(+) = N(6)-[(R)-S(8)-aminomethyldihydrolipoyl]-L-lysyl-[glycine-cleavage complex H protein] + CO2. Functionally, the glycine cleavage system catalyzes the degradation of glycine. The P protein binds the alpha-amino group of glycine through its pyridoxal phosphate cofactor; CO(2) is released and the remaining methylamine moiety is then transferred to the lipoamide cofactor of the H protein. This Bartonella henselae (strain ATCC 49882 / DSM 28221 / CCUG 30454 / Houston 1) (Rochalimaea henselae) protein is Glycine dehydrogenase (decarboxylating).